The primary structure comprises 749 residues: Disintegrin and metalloproteinase domain-containing protein 10 (749 aa).

The N-terminal stretch at M1–G18 is a signal peptide. Residues L19–R213 constitute a propeptide that is removed on maturation. The Extracellular portion of the chain corresponds to L19–E673. A Cysteine switch motif is present at residues G170–V177. C172 serves as a coordination point for Zn(2+). Positions N220–G457 constitute a Peptidase M12B domain. 17 cysteine pairs are disulfide-bonded: C222–C314, C345–C452, C400–C436, C461–C496, C472–C485, C474–C480, C484–C516, C504–C512, C511–C537, C525–C544, C531–C563, C556–C568, C573–C599, C581–C608, C583–C598, C595–C640, and C633–C646. 2 N-linked (GlcNAc...) asparagine glycosylation sites follow: N268 and N279. Zn(2+) is bound at residue H384. E385 is an active-site residue. Zn(2+)-binding residues include H388 and H394. N440 carries an N-linked (GlcNAc...) asparagine glycan. One can recognise a Disintegrin domain in the interval Q458–N552. N-linked (GlcNAc...) asparagine glycosylation occurs at N552. The chain crosses the membrane as a helical span at residues W674–A694. Residues G695 to H749 are Cytoplasmic-facing. The segment at P705–H749 is disordered. The SH3-binding motif lies at P709–P716. A Phosphothreonine modification is found at T720. The SH3-binding motif lies at R723 to T729.

The cofactor is Zn(2+). Post-translationally, the precursor is cleaved by furin and PCSK7.

Its subcellular location is the membrane. It catalyses the reaction Endopeptidase of broad specificity.. In terms of biological role, controls the proteolytic processing of Notch and mediates lateral inhibition during neurogenesis. This Xenopus laevis (African clawed frog) protein is Disintegrin and metalloproteinase domain-containing protein 10 (adam10).